The following is a 141-amino-acid chain: MEQTLSIIKPDSVGKAHIGEIIAIFEKSGLRIAAMKMVHLSVKEAEGFYVVHKERPFFQELVDFMISGPVVVMVLQGENAVARNRELMGATNPKEAAEGSIRALFGESIGVNAVHGSDSLENAAIEVSYFFAKTEVVNSVA.

Residues Lys9, Phe57, Arg85, Thr91, Arg102, and Asn112 each contribute to the ATP site. Residue His115 is the Pros-phosphohistidine intermediate of the active site.

Belongs to the NDK family. As to quaternary structure, homotetramer. The cofactor is Mg(2+).

The protein resides in the cytoplasm. The catalysed reaction is a 2'-deoxyribonucleoside 5'-diphosphate + ATP = a 2'-deoxyribonucleoside 5'-triphosphate + ADP. It carries out the reaction a ribonucleoside 5'-diphosphate + ATP = a ribonucleoside 5'-triphosphate + ADP. Functionally, major role in the synthesis of nucleoside triphosphates other than ATP. The ATP gamma phosphate is transferred to the NDP beta phosphate via a ping-pong mechanism, using a phosphorylated active-site intermediate. The chain is Nucleoside diphosphate kinase from Chlamydia trachomatis serovar L2 (strain ATCC VR-902B / DSM 19102 / 434/Bu).